The chain runs to 78 residues: Acyl carrier protein (78 aa).

In terms of domain architecture, Carrier spans 2–77; sequence STIEERVKKI…EAIDYVTAHA (76 aa). Ser-37 carries the O-(pantetheine 4'-phosphoryl)serine modification.

Belongs to the acyl carrier protein (ACP) family. In terms of processing, 4'-phosphopantetheine is transferred from CoA to a specific serine of apo-ACP by AcpS. This modification is essential for activity because fatty acids are bound in thioester linkage to the sulfhydryl of the prosthetic group.

The protein localises to the cytoplasm. It participates in lipid metabolism; fatty acid biosynthesis. Carrier of the growing fatty acid chain in fatty acid biosynthesis. In Ectopseudomonas mendocina (strain ymp) (Pseudomonas mendocina), this protein is Acyl carrier protein.